Consider the following 728-residue polypeptide: 1,4-alpha-glucan branching enzyme GlgB (728 aa).

Aspartate 405 functions as the Nucleophile in the catalytic mechanism. Glutamate 458 acts as the Proton donor in catalysis.

The protein belongs to the glycosyl hydrolase 13 family. GlgB subfamily. As to quaternary structure, monomer.

The enzyme catalyses Transfers a segment of a (1-&gt;4)-alpha-D-glucan chain to a primary hydroxy group in a similar glucan chain.. It participates in glycan biosynthesis; glycogen biosynthesis. Catalyzes the formation of the alpha-1,6-glucosidic linkages in glycogen by scission of a 1,4-alpha-linked oligosaccharide from growing alpha-1,4-glucan chains and the subsequent attachment of the oligosaccharide to the alpha-1,6 position. This is 1,4-alpha-glucan branching enzyme GlgB from Shigella flexneri.